We begin with the raw amino-acid sequence, 538 residues long: T-complex protein 1 subunit epsilon (538 aa).

The protein belongs to the TCP-1 chaperonin family. In terms of assembly, heterooligomeric complex of about 850 to 900 kDa that forms two stacked rings, 12 to 16 nm in diameter.

It is found in the cytoplasm. Molecular chaperone; assists the folding of proteins upon ATP hydrolysis. Known to play a role, in vitro, in the folding of actin and tubulin. In Dictyostelium discoideum (Social amoeba), this protein is T-complex protein 1 subunit epsilon (cct5).